We begin with the raw amino-acid sequence, 704 residues long: Elongation factor G (704 aa).

The tr-type G domain maps to K10–M286. Residues A19–T26, D83–H87, and N137–D140 contribute to the GTP site.

The protein belongs to the TRAFAC class translation factor GTPase superfamily. Classic translation factor GTPase family. EF-G/EF-2 subfamily.

The protein resides in the cytoplasm. Functionally, catalyzes the GTP-dependent ribosomal translocation step during translation elongation. During this step, the ribosome changes from the pre-translocational (PRE) to the post-translocational (POST) state as the newly formed A-site-bound peptidyl-tRNA and P-site-bound deacylated tRNA move to the P and E sites, respectively. Catalyzes the coordinated movement of the two tRNA molecules, the mRNA and conformational changes in the ribosome. This chain is Elongation factor G, found in Corynebacterium jeikeium (strain K411).